Reading from the N-terminus, the 246-residue chain is Protein SRL3 (246 aa).

A compositionally biased stretch (polar residues) spans 49–61 (SISEAQDSPTSAP). Disordered stretches follow at residues 49–68 (SISEAQDSPTSAPSPDGNED) and 200–229 (HAKSNRVDNVNVSPLRWSSHRRTQSTQENS). A Phosphoserine modification is found at Ser-212.

Interacts with CLN2. Phosphorylated by CDC28, probably in association with G1 cyclin CLN2.

Its subcellular location is the cytoplasm. Its function is as follows. Weakly suppresses a RAD53 null mutation when overexpressed. The protein is Protein SRL3 (SRL3) of Saccharomyces cerevisiae (strain ATCC 204508 / S288c) (Baker's yeast).